We begin with the raw amino-acid sequence, 274 residues long: uncharacterized protein (274 aa).

Residues 99–206 are a coiled coil; sequence NNVISGYVDL…ESEMEIFIQK (108 aa).

This is an uncharacterized protein from Dictyostelium discoideum (Social amoeba).